The primary structure comprises 99 residues: High mobility group protein I (99 aa).

A disordered region spans residues 1 to 99 (MSDSPVKKGR…ADTEEVNSSD (99 aa)). The residue at position 4 (Ser4) is a Phosphoserine; by CDC2 and MAPK. The segment at residues 7 to 19 (KKGRGRPAKAKPE) is a DNA-binding region (a.T hook 1). The span at 16–46 (AKPEETASPKAAKKEEKKVEEVPKKIEESTK) shows a compositional bias: basic and acidic residues. The residue at position 23 (Ser23) is a Phosphoserine; by MAPK. The segment at residues 54–66 (KKGRGRPSKGDKA) is a DNA-binding region (a.T hook 2). Position 73 is a phosphoserine; by PKC (Ser73). Residues 74 to 86 (GKGRGRPAKNAKK) constitute a DNA-binding region (a.T hook 3). Positions 90–99 (ADTEEVNSSD) are enriched in acidic residues.

This sequence belongs to the HMGA family. Phosphorylated in a cell-cycle dependent manner; substantially reduced in cells that have finished proliferating and are differentiated. Phosphorylation at Ser-4 and Ser-23 results in a 10-fold weakening of DNA-binding activity and altered the mode of protein-DNA interaction.

It is found in the nucleus. The protein resides in the nucleolus. It localises to the chromosome. Binds preferentially to the minor groove of A+T rich regions in double-stranded DNA via the second and third DBA-binding domains. It is suggested that these proteins could function in nucleosome phasing and in the 3'-end processing of mRNA transcripts. They are also involved in the transcription regulation of genes containing, or in close proximity to A+T-rich regions. This Chironomus tentans (Midge) protein is High mobility group protein I.